Reading from the N-terminus, the 340-residue chain is Lipoate--protein ligase 2 (340 aa).

The BPL/LPL catalytic domain maps to 31–222; that stretch reads FLDEDILFPY…QILGIDDIKE (192 aa). Residues arginine 73, 78–81, lysine 136, and alanine 140 each bind ATP; that span reads GAVY. A (R)-lipoate-binding site is contributed by lysine 136. A coiled-coil region spans residues 293–321; that stretch reads QGDIKDVEEALQGTKMTREDLMHQLKQLD.

It belongs to the LplA family.

It carries out the reaction L-lysyl-[lipoyl-carrier protein] + (R)-lipoate + ATP = N(6)-[(R)-lipoyl]-L-lysyl-[lipoyl-carrier protein] + AMP + diphosphate + H(+). It functions in the pathway protein modification; protein lipoylation via exogenous pathway; protein N(6)-(lipoyl)lysine from lipoate: step 1/2. The protein operates within protein modification; protein lipoylation via exogenous pathway; protein N(6)-(lipoyl)lysine from lipoate: step 2/2. In terms of biological role, catalyzes specifically the lipoylation of GcvH-L (SAV0324), likely via the ATP-dependent activation of lipoate to lipoyl-AMP and the transfer of the activated lipoyl onto the lipoyl domain of the target protein. Can also utilize lipoamide as substrate for GcvH-L modification. The sequence is that of Lipoate--protein ligase 2 from Staphylococcus aureus (strain Mu50 / ATCC 700699).